The sequence spans 314 residues: Probable cell division protein WhiA (314 aa).

The H-T-H motif DNA-binding region spans 274–308 (SLKELGEMVSTGPISKSGVNHRLRKLNDLADKIRN).

This sequence belongs to the WhiA family.

Its function is as follows. Involved in cell division and chromosome segregation. The chain is Probable cell division protein WhiA from Staphylococcus aureus (strain Mu3 / ATCC 700698).